Here is a 941-residue protein sequence, read N- to C-terminus: HMG box transcription factor BBX (941 aa).

Residues Met1–Gly18 show a composition bias toward basic and acidic residues. Disordered regions lie at residues Met1–Pro21, Phe39–Ala80, Val157–Ala200, and Thr221–Lys242. 2 stretches are compositionally biased toward acidic residues: residues Phe39–Ile52 and Leu63–Ser75. A DNA-binding region (HMG box) is located at residues Ala80–Lys148. Residues Ser177 to Glu191 show a composition bias toward basic and acidic residues. A Phosphoserine modification is found at Ser243. The stretch at Gly326–Leu370 forms a coiled coil. Residue Lys385 forms a Glycyl lysine isopeptide (Lys-Gly) (interchain with G-Cter in SUMO2) linkage. Residues Ile438–Asp482 are disordered. Positions Lys449–Met459 are enriched in basic residues. Residues Ser478 and Ser485 each carry the phosphoserine modification. 2 stretches are compositionally biased toward basic and acidic residues: residues Gly499 to Arg508 and Lys536 to Pro552. Disordered regions lie at residues Gly499 to His600 and Asn635 to Lys677. Residue Lys573 forms a Glycyl lysine isopeptide (Lys-Gly) (interchain with G-Cter in SUMO2) linkage. Residues Thr661 to Ser670 show a composition bias toward low complexity. Residue Lys696 forms a Glycyl lysine isopeptide (Lys-Gly) (interchain with G-Cter in SUMO2) linkage. Ser704 is modified (phosphoserine). Disordered regions lie at residues Pro714–Ser771, Ile803–Pro888, and His912–Gln941. Residues Gly723 to Lys742 show a composition bias toward polar residues. Basic residues predominate over residues Asn743–Glu757. Residues Lys758 to Ser771 show a composition bias toward basic and acidic residues. Over residues Ser805 to Glu817 the composition is skewed to polar residues. At Ser822 the chain carries Phosphoserine. The span at Gln823–His834 shows a compositional bias: basic residues. The residue at position 844 (Ser844) is a Phosphoserine. Basic and acidic residues predominate over residues Thr866 to Glu882.

The protein localises to the nucleus. Transcription factor that is necessary for cell cycle progression from G1 to S phase. The protein is HMG box transcription factor BBX (BBX) of Homo sapiens (Human).